We begin with the raw amino-acid sequence, 345 residues long: 1-aminocyclopropane-1-carboxylate oxidase homolog 7 (345 aa).

Lys-16 is covalently cross-linked (Glycyl lysine isopeptide (Lys-Gly) (interchain with G-Cter in ubiquitin)). Residues 194–293 (KGLHMICHYY…RISIACFFSS (100 aa)) enclose the Fe2OG dioxygenase domain. Fe cation-binding residues include His-218, Asp-220, and His-274. Arg-284 contacts 2-oxoglutarate.

It belongs to the iron/ascorbate-dependent oxidoreductase family. Fe(2+) is required as a cofactor.

The polypeptide is 1-aminocyclopropane-1-carboxylate oxidase homolog 7 (Arabidopsis thaliana (Mouse-ear cress)).